Here is a 129-residue protein sequence, read N- to C-terminus: Glycine cleavage system H protein (129 aa).

The region spanning 24–106 (TYTVGITEHA…YAGGWIFKIK (83 aa)) is the Lipoyl-binding domain. The residue at position 65 (K65) is an N6-lipoyllysine.

The protein belongs to the GcvH family. In terms of assembly, the glycine cleavage system is composed of four proteins: P, T, L and H. (R)-lipoate is required as a cofactor.

Its function is as follows. The glycine cleavage system catalyzes the degradation of glycine. The H protein shuttles the methylamine group of glycine from the P protein to the T protein. In Escherichia fergusonii (strain ATCC 35469 / DSM 13698 / CCUG 18766 / IAM 14443 / JCM 21226 / LMG 7866 / NBRC 102419 / NCTC 12128 / CDC 0568-73), this protein is Glycine cleavage system H protein.